A 176-amino-acid polypeptide reads, in one-letter code: Avian agnoprotein 1a (176 aa).

Disordered regions lie at residues 1 to 85 and 116 to 176; these read MSTP…GKLE and VYAA…RPAR. Basic and acidic residues predominate over residues 75 to 85; the sequence is YDRQNRFGKLE. Residues 76–119 are a coiled coil; that stretch reads DRQNRFGKLESEIRETKSQLETLRQELKHLQADVDDLKETVYAA. The span at 137 to 161 shows a compositional bias: low complexity; it reads TPTATTPEASPAAPTTESTETTGPS.

Interacts with VP1.

It is found in the virion. Its subcellular location is the host nucleus. The polypeptide is Avian agnoprotein 1a (Budgerigar fledgling disease virus (BFPyV)).